Reading from the N-terminus, the 108-residue chain is UPF0145 protein LJ_1287 (108 aa).

The protein belongs to the UPF0145 family.

The protein is UPF0145 protein LJ_1287 of Lactobacillus johnsonii (strain CNCM I-12250 / La1 / NCC 533).